We begin with the raw amino-acid sequence, 568 residues long: Proline--tRNA ligase (568 aa).

The protein belongs to the class-II aminoacyl-tRNA synthetase family. ProS type 1 subfamily. In terms of assembly, homodimer.

The protein resides in the cytoplasm. It carries out the reaction tRNA(Pro) + L-proline + ATP = L-prolyl-tRNA(Pro) + AMP + diphosphate. Catalyzes the attachment of proline to tRNA(Pro) in a two-step reaction: proline is first activated by ATP to form Pro-AMP and then transferred to the acceptor end of tRNA(Pro). As ProRS can inadvertently accommodate and process non-cognate amino acids such as alanine and cysteine, to avoid such errors it has two additional distinct editing activities against alanine. One activity is designated as 'pretransfer' editing and involves the tRNA(Pro)-independent hydrolysis of activated Ala-AMP. The other activity is designated 'posttransfer' editing and involves deacylation of mischarged Ala-tRNA(Pro). The misacylated Cys-tRNA(Pro) is not edited by ProRS. This is Proline--tRNA ligase from Listeria monocytogenes serotype 4b (strain F2365).